The primary structure comprises 120 residues: Ribonuclease P protein component (120 aa).

This sequence belongs to the RnpA family. Consists of a catalytic RNA component (M1 or rnpB) and a protein subunit.

The enzyme catalyses Endonucleolytic cleavage of RNA, removing 5'-extranucleotides from tRNA precursor.. Functionally, RNaseP catalyzes the removal of the 5'-leader sequence from pre-tRNA to produce the mature 5'-terminus. It can also cleave other RNA substrates such as 4.5S RNA. The protein component plays an auxiliary but essential role in vivo by binding to the 5'-leader sequence and broadening the substrate specificity of the ribozyme. This is Ribonuclease P protein component from Latilactobacillus sakei subsp. sakei (strain 23K) (Lactobacillus sakei subsp. sakei).